Here is a 111-residue protein sequence, read N- to C-terminus: UPF0122 protein YofM (111 aa).

The protein belongs to the UPF0122 family.

Might take part in the signal recognition particle (SRP) pathway. This is inferred from the conservation of its genetic proximity to ftsY/ffh. May be a regulatory protein. The sequence is that of UPF0122 protein YofM (yofM) from Lactococcus lactis subsp. lactis (strain IL1403) (Streptococcus lactis).